The primary structure comprises 234 residues: Proteasome subunit alpha type-2 (234 aa).

N-acetylalanine is present on A2. Y121 carries the post-translational modification Phosphotyrosine.

The protein belongs to the peptidase T1A family. The 26S proteasome consists of a 20S proteasome core and two 19S regulatory subunits. The 20S proteasome core is a barrel-shaped complex made of 28 subunits that are arranged in four stacked rings. The two outer rings are each formed by seven alpha subunits, and the two inner rings are formed by seven beta subunits. The proteolytic activity is exerted by three beta-subunits PSMB5, PSMB6 and PSMB7.

The protein resides in the cytoplasm. Its subcellular location is the nucleus. Its function is as follows. Component of the 20S core proteasome complex involved in the proteolytic degradation of most intracellular proteins. This complex plays numerous essential roles within the cell by associating with different regulatory particles. Associated with two 19S regulatory particles, forms the 26S proteasome and thus participates in the ATP-dependent degradation of ubiquitinated proteins. The 26S proteasome plays a key role in the maintenance of protein homeostasis by removing misfolded or damaged proteins that could impair cellular functions, and by removing proteins whose functions are no longer required. Associated with the PA200 or PA28, the 20S proteasome mediates ubiquitin-independent protein degradation. This type of proteolysis is required in several pathways including spermatogenesis (20S-PA200 complex) or generation of a subset of MHC class I-presented antigenic peptides (20S-PA28 complex). The protein is Proteasome subunit alpha type-2 (psma2) of Xenopus laevis (African clawed frog).